The chain runs to 1404 residues: DNA-directed RNA polymerase subunit beta' (1404 aa).

Positions 72, 74, 87, and 90 each coordinate Zn(2+). Mg(2+)-binding residues include aspartate 463, aspartate 465, and aspartate 467. The Zn(2+) site is built by cysteine 811, cysteine 885, cysteine 892, and cysteine 895.

It belongs to the RNA polymerase beta' chain family. As to quaternary structure, the RNAP catalytic core consists of 2 alpha, 1 beta, 1 beta' and 1 omega subunit. When a sigma factor is associated with the core the holoenzyme is formed, which can initiate transcription. Mg(2+) serves as cofactor. Zn(2+) is required as a cofactor.

It carries out the reaction RNA(n) + a ribonucleoside 5'-triphosphate = RNA(n+1) + diphosphate. In terms of biological role, DNA-dependent RNA polymerase catalyzes the transcription of DNA into RNA using the four ribonucleoside triphosphates as substrates. In Jannaschia sp. (strain CCS1), this protein is DNA-directed RNA polymerase subunit beta'.